The sequence spans 404 residues: Phosphopentomutase (404 aa).

Residues aspartate 10, aspartate 303, histidine 308, aspartate 344, histidine 345, and histidine 356 each contribute to the Mn(2+) site.

It belongs to the phosphopentomutase family. The cofactor is Mn(2+).

It is found in the cytoplasm. The enzyme catalyses 2-deoxy-alpha-D-ribose 1-phosphate = 2-deoxy-D-ribose 5-phosphate. It catalyses the reaction alpha-D-ribose 1-phosphate = D-ribose 5-phosphate. It functions in the pathway carbohydrate degradation; 2-deoxy-D-ribose 1-phosphate degradation; D-glyceraldehyde 3-phosphate and acetaldehyde from 2-deoxy-alpha-D-ribose 1-phosphate: step 1/2. Isomerase that catalyzes the conversion of deoxy-ribose 1-phosphate (dRib-1-P) and ribose 1-phosphate (Rib-1-P) to deoxy-ribose 5-phosphate (dRib-5-P) and ribose 5-phosphate (Rib-5-P), respectively. The sequence is that of Phosphopentomutase from Shewanella putrefaciens (strain CN-32 / ATCC BAA-453).